Consider the following 199-residue polypeptide: Ribonuclease HII (199 aa).

One can recognise an RNase H type-2 domain in the interval 10–199; that stretch reads HLVAGVDEVG…VKRALGLASN (190 aa). Aspartate 16, glutamate 17, and aspartate 108 together coordinate a divalent metal cation.

The protein belongs to the RNase HII family. Requires Mn(2+) as cofactor. Mg(2+) is required as a cofactor.

The protein localises to the cytoplasm. The enzyme catalyses Endonucleolytic cleavage to 5'-phosphomonoester.. Its function is as follows. Endonuclease that specifically degrades the RNA of RNA-DNA hybrids. The protein is Ribonuclease HII of Klebsiella pneumoniae subsp. pneumoniae (strain ATCC 700721 / MGH 78578).